Here is a 282-residue protein sequence, read N- to C-terminus: Cell division protein DivIB (282 aa).

Topologically, residues 1-59 are cytoplasmic; the sequence is MLDDRSAIEHHKYSQRLTELERRSAAAQQRQQKKKPPKMHVGNKIRGIKIKRYVSNGER. A disordered region spans residues 19–41; sequence ELERRSAAAQQRQQKKKPPKMHV. The span at 31-41 shows a compositional bias: basic residues; that stretch reads QQKKKPPKMHV. The chain crosses the membrane as a helical span at residues 60-80; sequence VLKLVVLFSAILLFMLYIISP. Residues 81-282 lie on the Extracellular side of the membrane; sequence LSKITTLHVT…YSYDYGSKDK (202 aa). A POTRA domain is found at 82 to 153; sequence SKITTLHVTG…QSLQISVKEN (72 aa).

This sequence belongs to the FtsQ/DivIB family. DivIB subfamily.

Its subcellular location is the cell membrane. Its function is as follows. Cell division protein that may be involved in stabilizing or promoting the assembly of the division complex. The polypeptide is Cell division protein DivIB (Limosilactobacillus reuteri (strain ATCC 55730 / SD2112) (Lactobacillus reuteri)).